We begin with the raw amino-acid sequence, 287 residues long: Thymidylate synthase (287 aa).

Arginine 21 lines the dUMP pocket. A (6R)-5,10-methylene-5,6,7,8-tetrahydrofolate-binding site is contributed by asparagine 51. 150 to 151 (RR) is a dUMP binding site. Cysteine 170 (nucleophile) is an active-site residue. Residues 190–193 (RSGD), asparagine 201, and 231–233 (HIY) each bind dUMP. Aspartate 193 contributes to the (6R)-5,10-methylene-5,6,7,8-tetrahydrofolate binding site. Alanine 286 is a binding site for (6R)-5,10-methylene-5,6,7,8-tetrahydrofolate.

This sequence belongs to the thymidylate synthase family. Bacterial-type ThyA subfamily. In terms of assembly, homodimer.

Its subcellular location is the cytoplasm. The catalysed reaction is dUMP + (6R)-5,10-methylene-5,6,7,8-tetrahydrofolate = 7,8-dihydrofolate + dTMP. It participates in pyrimidine metabolism; dTTP biosynthesis. In terms of biological role, catalyzes the reductive methylation of 2'-deoxyuridine-5'-monophosphate (dUMP) to 2'-deoxythymidine-5'-monophosphate (dTMP) while utilizing 5,10-methylenetetrahydrofolate (mTHF) as the methyl donor and reductant in the reaction, yielding dihydrofolate (DHF) as a by-product. This enzymatic reaction provides an intracellular de novo source of dTMP, an essential precursor for DNA biosynthesis. In Mycoplasma genitalium (strain ATCC 33530 / DSM 19775 / NCTC 10195 / G37) (Mycoplasmoides genitalium), this protein is Thymidylate synthase.